A 317-amino-acid polypeptide reads, in one-letter code: MQRSLKWFASTTTVAMLFVLIGGALVTKTDSGMGCGRSWPLCHGQWIPDDITPQLVIELSHRLVSGLAAIMVLILCIRSWRVMGHVRETKPLAVLSFVFLVLQSLIGAAAVVWGQSDFVMALHFGISLISFAAVLLLTLLIFVVDKKFSPTSLQLDGQMRFHIYGIIIYSYLVVYTGALVRHTNASLACPSWPLCAKSRLLPVQFHEWVQMGHRLAAAVIIIWIAVATVHAARYYREQPVIYYGWIISLLLVLAQMVTGALVVFTELNLYISLAHAFFISCLFGVLSYLLLLALRTRRRPATAAGRSVEDTASAPLK.

Over 1–6 (MQRSLK) the chain is Cytoplasmic. Residues 7–27 (WFASTTTVAMLFVLIGGALVT) traverse the membrane as a helical segment. Residues 28-54 (KTDSGMGCGRSWPLCHGQWIPDDITPQ) are Extracellular-facing. Cys-35 and Cys-42 are joined by a disulfide. A helical membrane pass occupies residues 55–75 (LVIELSHRLVSGLAAIMVLIL). Glu-58 is an active-site residue. His-61 contributes to the heme o binding site. The Cytoplasmic portion of the chain corresponds to 76–91 (CIRSWRVMGHVRETKP). The chain crosses the membrane as a helical span at residues 92–112 (LAVLSFVFLVLQSLIGAAAVV). The Extracellular segment spans residues 113–123 (WGQSDFVMALH). Heme o is bound at residue His-123. The helical transmembrane segment at 124-144 (FGISLISFAAVLLLTLLIFVV) threads the bilayer. At 145–159 (DKKFSPTSLQLDGQM) the chain is on the cytoplasmic side. A helical transmembrane segment spans residues 160 to 180 (RFHIYGIIIYSYLVVYTGALV). Over 181-214 (RHTNASLACPSWPLCAKSRLLPVQFHEWVQMGHR) the chain is Extracellular. Cysteines 189 and 195 form a disulfide. His-213 contacts heme b. Residues 215 to 235 (LAAAVIIIWIAVATVHAARYY) traverse the membrane as a helical segment. Topologically, residues 236 to 243 (REQPVIYY) are cytoplasmic. The chain crosses the membrane as a helical span at residues 244–264 (GWIISLLLVLAQMVTGALVVF). Residues 265–272 (TELNLYIS) lie on the Extracellular side of the membrane. Residues 273–293 (LAHAFFISCLFGVLSYLLLLA) traverse the membrane as a helical segment. His-275 is a binding site for heme b. At 294–317 (LRTRRRPATAAGRSVEDTASAPLK) the chain is on the cytoplasmic side.

Belongs to the COX15/CtaA family. Type 1 subfamily. Interacts with CtaB. Requires heme b as cofactor.

Its subcellular location is the cell membrane. It catalyses the reaction Fe(II)-heme o + 2 A + H2O = Fe(II)-heme a + 2 AH2. It participates in porphyrin-containing compound metabolism; heme A biosynthesis; heme A from heme O: step 1/1. Its function is as follows. Catalyzes the conversion of heme O to heme A by two successive hydroxylations of the methyl group at C8. The first hydroxylation forms heme I, the second hydroxylation results in an unstable dihydroxymethyl group, which spontaneously dehydrates, resulting in the formyl group of heme A. This is Heme A synthase from Geobacillus thermodenitrificans.